The chain runs to 462 residues: Syringate O-demethylase (462 aa).

It belongs to the GcvT family.

It carries out the reaction syringate + (6S)-5,6,7,8-tetrahydrofolate = 3-O-methylgallate + (6S)-5-methyl-5,6,7,8-tetrahydrofolate. Its pathway is secondary metabolite metabolism; lignin degradation. Involved in the catabolism of syringate. Catalyzes the conversion of syringate to 3-O-methylgallate (3MGA) in the presence of tetrahydrofolate. Has weak activity with vanillate and 3-O-methylgallate. The sequence is that of Syringate O-demethylase from Sphingobium sp. (strain NBRC 103272 / SYK-6).